The following is a 418-amino-acid chain: Light-independent protochlorophyllide reductase subunit N (418 aa).

[4Fe-4S] cluster-binding residues include Cys17, Cys42, and Cys103.

The protein belongs to the BchN/ChlN family. Protochlorophyllide reductase is composed of three subunits; ChlL, ChlN and ChlB. Forms a heterotetramer of two ChlB and two ChlN subunits. Requires [4Fe-4S] cluster as cofactor.

It catalyses the reaction chlorophyllide a + oxidized 2[4Fe-4S]-[ferredoxin] + 2 ADP + 2 phosphate = protochlorophyllide a + reduced 2[4Fe-4S]-[ferredoxin] + 2 ATP + 2 H2O. It participates in porphyrin-containing compound metabolism; chlorophyll biosynthesis (light-independent). In terms of biological role, component of the dark-operative protochlorophyllide reductase (DPOR) that uses Mg-ATP and reduced ferredoxin to reduce ring D of protochlorophyllide (Pchlide) to form chlorophyllide a (Chlide). This reaction is light-independent. The NB-protein (ChlN-ChlB) is the catalytic component of the complex. This Prochlorococcus marinus (strain MIT 9215) protein is Light-independent protochlorophyllide reductase subunit N.